The following is a 209-amino-acid chain: Cytidylate kinase (209 aa).

9–17 contributes to the ATP binding site; that stretch reads GPAAAGKGT.

This sequence belongs to the cytidylate kinase family. Type 1 subfamily.

Its subcellular location is the cytoplasm. It catalyses the reaction CMP + ATP = CDP + ADP. It carries out the reaction dCMP + ATP = dCDP + ADP. The chain is Cytidylate kinase from Granulibacter bethesdensis (strain ATCC BAA-1260 / CGDNIH1).